Consider the following 648-residue polypeptide: Threonine--tRNA ligase (648 aa).

A TGS domain is found at 1-61 (MINITFPDGA…DTDGSIEIVT (61 aa)). The catalytic stretch occupies residues 242 to 540 (DHRKLGKELD…LIETYKGAFP (299 aa)). Positions 336, 387, and 517 each coordinate Zn(2+).

It belongs to the class-II aminoacyl-tRNA synthetase family. In terms of assembly, homodimer. The cofactor is Zn(2+).

It is found in the cytoplasm. The catalysed reaction is tRNA(Thr) + L-threonine + ATP = L-threonyl-tRNA(Thr) + AMP + diphosphate + H(+). Catalyzes the attachment of threonine to tRNA(Thr) in a two-step reaction: L-threonine is first activated by ATP to form Thr-AMP and then transferred to the acceptor end of tRNA(Thr). Also edits incorrectly charged L-seryl-tRNA(Thr). The sequence is that of Threonine--tRNA ligase from Streptococcus uberis (strain ATCC BAA-854 / 0140J).